A 467-amino-acid chain; its full sequence is Glycogen synthase (467 aa).

ADP-alpha-D-glucose is bound at residue Lys16.

It belongs to the glycosyltransferase 1 family. Bacterial/plant glycogen synthase subfamily.

The catalysed reaction is [(1-&gt;4)-alpha-D-glucosyl](n) + ADP-alpha-D-glucose = [(1-&gt;4)-alpha-D-glucosyl](n+1) + ADP + H(+). The protein operates within glycan biosynthesis; glycogen biosynthesis. Its function is as follows. Synthesizes alpha-1,4-glucan chains using ADP-glucose. This is Glycogen synthase from Paracoccus denitrificans (strain Pd 1222).